Consider the following 27-residue polypeptide: NADH-ubiquinone oxidoreductase chain 1 (27 aa).

The helical transmembrane segment at L3 to F23 threads the bilayer.

It belongs to the complex I subunit 1 family.

The protein localises to the mitochondrion inner membrane. It carries out the reaction a ubiquinone + NADH + 5 H(+)(in) = a ubiquinol + NAD(+) + 4 H(+)(out). Functionally, core subunit of the mitochondrial membrane respiratory chain NADH dehydrogenase (Complex I) that is believed to belong to the minimal assembly required for catalysis. Complex I functions in the transfer of electrons from NADH to the respiratory chain. The immediate electron acceptor for the enzyme is believed to be ubiquinone. In Simulium vittatum (Striped black fly), this protein is NADH-ubiquinone oxidoreductase chain 1 (ND1).